The following is a 283-amino-acid chain: tRNA pseudouridine synthase B (283 aa).

Catalysis depends on Asp-38, which acts as the Nucleophile.

Belongs to the pseudouridine synthase TruB family. Type 1 subfamily.

The catalysed reaction is uridine(55) in tRNA = pseudouridine(55) in tRNA. Functionally, responsible for synthesis of pseudouridine from uracil-55 in the psi GC loop of transfer RNAs. This Aster yellows witches'-broom phytoplasma (strain AYWB) protein is tRNA pseudouridine synthase B.